The following is a 67-amino-acid chain: UPF0434 protein Patl_1782 (67 aa).

The protein belongs to the UPF0434 family.

This is UPF0434 protein Patl_1782 from Pseudoalteromonas atlantica (strain T6c / ATCC BAA-1087).